The chain runs to 531 residues: Putative UDP-glucuronosyltransferase ugt-46 (531 aa).

The signal sequence occupies residues 1–17 (MRLIFVLLATFVNAAFS). Asn304 carries an N-linked (GlcNAc...) asparagine glycan. The helical transmembrane segment at 493–513 (VIIPVFWLSISLVIPTIFGWY) threads the bilayer.

It belongs to the UDP-glycosyltransferase family.

The protein localises to the membrane. The catalysed reaction is glucuronate acceptor + UDP-alpha-D-glucuronate = acceptor beta-D-glucuronoside + UDP + H(+). The sequence is that of Putative UDP-glucuronosyltransferase ugt-46 (ugt-46) from Caenorhabditis elegans.